We begin with the raw amino-acid sequence, 301 residues long: Methionyl-tRNA formyltransferase (301 aa).

Residue 110–113 (SLLP) coordinates (6S)-5,6,7,8-tetrahydrofolate.

Belongs to the Fmt family.

The catalysed reaction is L-methionyl-tRNA(fMet) + (6R)-10-formyltetrahydrofolate = N-formyl-L-methionyl-tRNA(fMet) + (6S)-5,6,7,8-tetrahydrofolate + H(+). Its function is as follows. Attaches a formyl group to the free amino group of methionyl-tRNA(fMet). The formyl group appears to play a dual role in the initiator identity of N-formylmethionyl-tRNA by promoting its recognition by IF2 and preventing the misappropriation of this tRNA by the elongation apparatus. The protein is Methionyl-tRNA formyltransferase of Anaplasma phagocytophilum (strain HZ).